We begin with the raw amino-acid sequence, 156 residues long: ATP synthase subunit b (156 aa).

The helical transmembrane segment at 3-23 (ITLTIFAQALAFAGLIWIVAT) threads the bilayer.

The protein belongs to the ATPase B chain family. As to quaternary structure, F-type ATPases have 2 components, F(1) - the catalytic core - and F(0) - the membrane proton channel. F(1) has five subunits: alpha(3), beta(3), gamma(1), delta(1), epsilon(1). F(0) has three main subunits: a(1), b(2) and c(10-14). The alpha and beta chains form an alternating ring which encloses part of the gamma chain. F(1) is attached to F(0) by a central stalk formed by the gamma and epsilon chains, while a peripheral stalk is formed by the delta and b chains.

The protein resides in the cell inner membrane. Functionally, f(1)F(0) ATP synthase produces ATP from ADP in the presence of a proton or sodium gradient. F-type ATPases consist of two structural domains, F(1) containing the extramembraneous catalytic core and F(0) containing the membrane proton channel, linked together by a central stalk and a peripheral stalk. During catalysis, ATP synthesis in the catalytic domain of F(1) is coupled via a rotary mechanism of the central stalk subunits to proton translocation. In terms of biological role, component of the F(0) channel, it forms part of the peripheral stalk, linking F(1) to F(0). The polypeptide is ATP synthase subunit b (Xanthomonas campestris pv. campestris (strain 8004)).